The sequence spans 333 residues: Adenosine deaminase (333 aa).

Residues His12 and His14 each contribute to the Zn(2+) site. Substrate-binding residues include His14, Asp16, and Gly170. Residue His197 participates in Zn(2+) binding. Catalysis depends on Glu200, which acts as the Proton donor. Asp278 contributes to the Zn(2+) binding site. Asp279 serves as a coordination point for substrate.

The protein belongs to the metallo-dependent hydrolases superfamily. Adenosine and AMP deaminases family. Adenosine deaminase subfamily. The cofactor is Zn(2+).

It catalyses the reaction adenosine + H2O + H(+) = inosine + NH4(+). The catalysed reaction is 2'-deoxyadenosine + H2O + H(+) = 2'-deoxyinosine + NH4(+). Catalyzes the hydrolytic deamination of adenosine and 2-deoxyadenosine. This is Adenosine deaminase from Salmonella enteritidis PT4 (strain P125109).